The primary structure comprises 430 residues: Serine--tRNA ligase (430 aa).

236–238 (TAE) is an L-serine binding site. 267-269 (RRE) provides a ligand contact to ATP. Glu-290 contributes to the L-serine binding site. 354–357 (EISS) is an ATP binding site. Ser-390 serves as a coordination point for L-serine.

Belongs to the class-II aminoacyl-tRNA synthetase family. Type-1 seryl-tRNA synthetase subfamily. As to quaternary structure, homodimer. The tRNA molecule binds across the dimer.

It is found in the cytoplasm. The catalysed reaction is tRNA(Ser) + L-serine + ATP = L-seryl-tRNA(Ser) + AMP + diphosphate + H(+). It carries out the reaction tRNA(Sec) + L-serine + ATP = L-seryl-tRNA(Sec) + AMP + diphosphate + H(+). It functions in the pathway aminoacyl-tRNA biosynthesis; selenocysteinyl-tRNA(Sec) biosynthesis; L-seryl-tRNA(Sec) from L-serine and tRNA(Sec): step 1/1. Functionally, catalyzes the attachment of serine to tRNA(Ser). Is also able to aminoacylate tRNA(Sec) with serine, to form the misacylated tRNA L-seryl-tRNA(Sec), which will be further converted into selenocysteinyl-tRNA(Sec). This chain is Serine--tRNA ligase, found in Gloeothece citriformis (strain PCC 7424) (Cyanothece sp. (strain PCC 7424)).